The following is a 78-amino-acid chain: MADSDKDELAEIAGFGYERARDELVNVVKMLEQGGMDLDESLALWERGEALANRCEEHLAGARKRVEDALAGSESDES.

Belongs to the XseB family. As to quaternary structure, heterooligomer composed of large and small subunits.

The protein resides in the cytoplasm. It catalyses the reaction Exonucleolytic cleavage in either 5'- to 3'- or 3'- to 5'-direction to yield nucleoside 5'-phosphates.. Its function is as follows. Bidirectionally degrades single-stranded DNA into large acid-insoluble oligonucleotides, which are then degraded further into small acid-soluble oligonucleotides. The sequence is that of Exodeoxyribonuclease 7 small subunit from Nocardia farcinica (strain IFM 10152).